A 226-amino-acid polypeptide reads, in one-letter code: Urease accessory protein UreF (226 aa).

The protein belongs to the UreF family. In terms of assembly, ureD, UreF and UreG form a complex that acts as a GTP-hydrolysis-dependent molecular chaperone, activating the urease apoprotein by helping to assemble the nickel containing metallocenter of UreC. The UreE protein probably delivers the nickel.

It localises to the cytoplasm. Functionally, required for maturation of urease via the functional incorporation of the urease nickel metallocenter. The polypeptide is Urease accessory protein UreF (Burkholderia ambifaria (strain ATCC BAA-244 / DSM 16087 / CCUG 44356 / LMG 19182 / AMMD) (Burkholderia cepacia (strain AMMD))).